The following is an 86-amino-acid chain: Small ribosomal subunit protein uS17 (86 aa).

This sequence belongs to the universal ribosomal protein uS17 family. Part of the 30S ribosomal subunit.

Functionally, one of the primary rRNA binding proteins, it binds specifically to the 5'-end of 16S ribosomal RNA. This chain is Small ribosomal subunit protein uS17, found in Tropheryma whipplei (strain TW08/27) (Whipple's bacillus).